We begin with the raw amino-acid sequence, 251 residues long: Large ribosomal subunit protein uL16m (251 aa).

The N-terminal 29 residues, 1–29 (MWRLLTRVPAPLLRMHFSDSWAALPTSAG), are a transit peptide targeting the mitochondrion.

The protein belongs to the universal ribosomal protein uL16 family. Component of the mitochondrial ribosome large subunit (39S) which comprises a 16S rRNA and about 50 distinct proteins.

Its subcellular location is the mitochondrion. This chain is Large ribosomal subunit protein uL16m (Mrpl16), found in Mus musculus (Mouse).